A 552-amino-acid polypeptide reads, in one-letter code: Protein TRM32 (552 aa).

The disordered stretch occupies residues 295–379; that stretch reads TDLPRDSSTS…NKTAEKTETL (85 aa). Positions 331–351 are enriched in basic and acidic residues; it reads VRAEKEEKYEVQEERSQENHL. The span at 352–371 shows a compositional bias: polar residues; the sequence is DSSNQRILQQEPDSVPSTNK.

The polypeptide is Protein TRM32 (TRM32) (Arabidopsis thaliana (Mouse-ear cress)).